Reading from the N-terminus, the 496-residue chain is Acetyltransferase adrJ (496 aa).

Residues His-174 and Asp-421 each act as proton acceptor in the active site.

Belongs to the plant acyltransferase family. Monomer.

The protein operates within secondary metabolite biosynthesis; terpenoid biosynthesis. In terms of biological role, acetyltransferase; part of the gene cluster that mediates the biosynthesis of andrastins, meroterpenoid compounds that exhibit inhibitory activity against ras farnesyltransferase, suggesting that they could be promising leads for antitumor agents. The first step of the pathway is the synthesis of 3,5-dimethylorsellinic acid (DMOA) by the polyketide synthase adrD via condensation of one acetyl-CoA starter unit with 3 malonyl-CoA units and 2 methylations. DMAO is then converted to farnesyl-DMAO by the prenyltransferase adrG. The methyltransferase adrK catalyzes the methylation of the carboxyl group of farnesyl-DMAO to farnesyl-DMAO methyl ester which is further converted to epoxyfarnesyl-DMAO methyl ester by the FAD-dependent monooxygenase adrH. The terpene cyclase adrI then catalyzes the carbon skeletal rearrangement to generate the andrastin E, the first compound in the pathway having the andrastin scaffold, with the tetracyclic ring system. The post-cyclization tailoring enzymes adrF, adrE, adrJ, and adrA, are involved in the conversion of andrastin E into andrastin A. The short chain dehydrogenase adrF is responsible for the oxidation of the C-3 a hydroxyl group of andrastin E to yield the corresponding ketone, andrastin D. The ketoreductase adrE stereoselectively reduces the carbonyl moiety to reverse the stereochemistry of the C-3 position to yield andrastin F. The acetyltransferase adrJ is the acetyltransferase that attaches the acetyl group to the C-3 hydroxyl group of andrastin F to yield andrastin C. Finally, the cytochrome P450 monooxygenase adrA catalyzes two sequential oxidation reactions of the C-23 methyl group, to generate the corresponding alcohol andrastin B, and aldehyde andrastin A. The sequence is that of Acetyltransferase adrJ from Penicillium roqueforti.